We begin with the raw amino-acid sequence, 163 residues long: Cuticle protein 38 (163 aa).

14 consecutive repeat copies span residues 7 to 10, 13 to 16, 20 to 23, 26 to 29, 56 to 59, 62 to 65, 68 to 71, 75 to 78, 81 to 84, 93 to 96, 123 to 126, 135 to 138, 141 to 144, and 156 to 159.

Component of the cuticle of migratory locust which contains more than 100 different structural proteins. The protein is Cuticle protein 38 of Locusta migratoria (Migratory locust).